Here is a 20-residue protein sequence, read N- to C-terminus: GFLDIVKGVGLVALGAVSKS.

As to expression, expressed by the skin glands.

Its subcellular location is the secreted. Its function is as follows. Has antimicrobial activity. This chain is Cruzioseptin-15, found in Cruziohyla calcarifer (Splendid leaf frog).